Here is a 129-residue protein sequence, read N- to C-terminus: Small ribosomal subunit protein uS11 (129 aa).

The protein belongs to the universal ribosomal protein uS11 family. Part of the 30S ribosomal subunit. Interacts with proteins S7 and S18. Binds to IF-3.

Its function is as follows. Located on the platform of the 30S subunit, it bridges several disparate RNA helices of the 16S rRNA. Forms part of the Shine-Dalgarno cleft in the 70S ribosome. This Ectopseudomonas mendocina (strain ymp) (Pseudomonas mendocina) protein is Small ribosomal subunit protein uS11.